A 160-amino-acid chain; its full sequence is SsrA-binding protein (160 aa).

Residues 131 to 160 form a disordered region; that stretch reads KKEYDKRDTEKARDSDREIQRAIRSKGKED.

Belongs to the SmpB family.

It is found in the cytoplasm. In terms of biological role, required for rescue of stalled ribosomes mediated by trans-translation. Binds to transfer-messenger RNA (tmRNA), required for stable association of tmRNA with ribosomes. tmRNA and SmpB together mimic tRNA shape, replacing the anticodon stem-loop with SmpB. tmRNA is encoded by the ssrA gene; the 2 termini fold to resemble tRNA(Ala) and it encodes a 'tag peptide', a short internal open reading frame. During trans-translation Ala-aminoacylated tmRNA acts like a tRNA, entering the A-site of stalled ribosomes, displacing the stalled mRNA. The ribosome then switches to translate the ORF on the tmRNA; the nascent peptide is terminated with the 'tag peptide' encoded by the tmRNA and targeted for degradation. The ribosome is freed to recommence translation, which seems to be the essential function of trans-translation. The sequence is that of SsrA-binding protein from Azotobacter vinelandii (strain DJ / ATCC BAA-1303).